A 1267-amino-acid chain; its full sequence is MVEAGGARRHRMTLESGDHTLTLFAYRTGPFRTILFYALTVLTLGIFRLILHWKQKWDVKMRMVPCTFEAAEYIYIIDNHNVSELQPVLRKSNATIPTENGEMRKVPELRWFVYRKLEYVWIDDLNSDESVDEISDNDNCWKTSFEIANRIPCRSLLAVSESNFGLTLSEISRRLEFYGRNEIVVQLRPILYLLVMEVITPFYVFQIFSVTVWYNDEYAYYASLIVILSLGSIVMDVYQIRTQEIRLRSMVHSTESVEVIREGTEMTIGSDQLVPGDILLIPPHGCLMQCDSVLMNGTVIVNESVLTGESVPITKVALTDETNDSVFNIEKNSKNVLFCGTQVLQTRFYRGKKVKAIVLRTAYSTLKGQLVRSIMYPKPVDFRFTKDLFKFILFLACISGCGFIYTIIVMIMRGNTLRRIIVRSLDIITITVPPALPAAMSVGIINAQLRLKKKEIFCISPSTINTCGAINVVCFDKTGTLTEDGLDFHVVRPVMSAVNQEIQKVKLEKSNRTEFMGEMTELTSRNGLPFDGDLVKAIATCHSLTRINGVLHGDPLDLILFQKTGWTMEEGIEGDIEEETQRFDNVQPSIIKPTDDKSAEYSVIRQFTFSSSLQRMSVIVFDPREDRPDNMMLYSKGSPEMILSLCDPNTVPEDYLLQVNSYAQHGFRLIAVARRPLDLNFNKASKVKRDAVECDLEMLGLIVMENRVKPVTLGVINQLNRANIRTVMVTGDNLLTGLSVARECGIIRPSKRAFLVEHVPGELDEYGRTKIFVKQSVSSSDEVIEDDASVSISMCSSTWKGSSEGDGFSPTNTEVETPNPVTADSLGHLIASSYHLAISGPTFAVIVHEYPELVDQLCSVCDVFARMAPDQKQSLVEQLQQIDYTVAMCGDGANDCAALKAAHAGISLSDAEASIAAPFTSKVPDIRCVPTVISEGRAALVTSFGIFKYMAGYSLTQFVTVMHLYWISNILTDGQFMYIDMFLITMFALLFGNTPAFYRLAHTPPPTRLLSIASMTSVVGQLIIIGVVQFIVFFSTSQQPWFTPYQPPVDDEVEDKRSMQGTALFCVSMFQYIILALVYSKGPPFRGNLWSNKPMCALTIFATLLCLFIVIWPTELVLKTLGNVELPSLTFRIFIVIVGAVNAAVSYGFETLFVDFFLLGYWERYKKKRSIEAIIDYVPTTNSDHIRRPSINGVTSSRTESTLLSAEGQQLHMTTSKNGKGGENPHSSALFERLISRIGGEPTWLTNPIPPHSLSEPEEPEKLERTY.

Topologically, residues 1–32 (MVEAGGARRHRMTLESGDHTLTLFAYRTGPFR) are extracellular. Residues 33–53 (TILFYALTVLTLGIFRLILHW) traverse the membrane as a helical segment. The Cytoplasmic segment spans residues 54-189 (KQKWDVKMRM…RNEIVVQLRP (136 aa)). The chain crosses the membrane as a helical span at residues 190–210 (ILYLLVMEVITPFYVFQIFSV). Topologically, residues 211 to 217 (TVWYNDE) are extracellular. The helical transmembrane segment at 218 to 238 (YAYYASLIVILSLGSIVMDVY) threads the bilayer. Over 239 to 390 (QIRTQEIRLR…DFRFTKDLFK (152 aa)) the chain is Cytoplasmic. The chain crosses the membrane as a helical span at residues 391 to 411 (FILFLACISGCGFIYTIIVMI). Residues 412 to 424 (MRGNTLRRIIVRS) lie on the Extracellular side of the membrane. A helical transmembrane segment spans residues 425–445 (LDIITITVPPALPAAMSVGII). Over 446–950 (NAQLRLKKKE…VTSFGIFKYM (505 aa)) the chain is Cytoplasmic. Asp-476 (4-aspartylphosphate intermediate) is an active-site residue. Mg(2+)-binding residues include Asp-891 and Asp-895. The chain crosses the membrane as a helical span at residues 951-971 (AGYSLTQFVTVMHLYWISNIL). The Extracellular portion of the chain corresponds to 972–976 (TDGQF). A helical membrane pass occupies residues 977–997 (MYIDMFLITMFALLFGNTPAF). At 998 to 1013 (YRLAHTPPPTRLLSIA) the chain is on the cytoplasmic side. The chain crosses the membrane as a helical span at residues 1014-1034 (SMTSVVGQLIIIGVVQFIVFF). At 1035–1058 (STSQQPWFTPYQPPVDDEVEDKRS) the chain is on the extracellular side. The chain crosses the membrane as a helical span at residues 1059–1079 (MQGTALFCVSMFQYIILALVY). Over 1080–1097 (SKGPPFRGNLWSNKPMCA) the chain is Cytoplasmic. Residues 1098-1118 (LTIFATLLCLFIVIWPTELVL) traverse the membrane as a helical segment. The Extracellular portion of the chain corresponds to 1119–1132 (KTLGNVELPSLTFR). Residues 1133–1153 (IFIVIVGAVNAAVSYGFETLF) form a helical membrane-spanning segment. Residues 1154–1267 (VDFFLLGYWE…EEPEKLERTY (114 aa)) are Cytoplasmic-facing. The tract at residues 1232 to 1256 (ERLISRIGGEPTWLTNPIPPHSLSE) is disordered.

Belongs to the cation transport ATPase (P-type) (TC 3.A.3) family. Type V subfamily.

Its subcellular location is the membrane. It carries out the reaction ATP + H2O = ADP + phosphate + H(+). This chain is Probable cation-transporting ATPase catp-6, found in Caenorhabditis elegans.